Reading from the N-terminus, the 86-residue chain is Cell division topological specificity factor (86 aa).

It belongs to the MinE family.

In terms of biological role, prevents the cell division inhibition by proteins MinC and MinD at internal division sites while permitting inhibition at polar sites. This ensures cell division at the proper site by restricting the formation of a division septum at the midpoint of the long axis of the cell. This is Cell division topological specificity factor from Shewanella piezotolerans (strain WP3 / JCM 13877).